Reading from the N-terminus, the 343-residue chain is Tetraacyldisaccharide 4'-kinase (343 aa).

Residue 53–60 participates in ATP binding; sequence TCGGAGKT.

This sequence belongs to the LpxK family.

It carries out the reaction a lipid A disaccharide + ATP = a lipid IVA + ADP + H(+). It participates in glycolipid biosynthesis; lipid IV(A) biosynthesis; lipid IV(A) from (3R)-3-hydroxytetradecanoyl-[acyl-carrier-protein] and UDP-N-acetyl-alpha-D-glucosamine: step 6/6. Functionally, transfers the gamma-phosphate of ATP to the 4'-position of a tetraacyldisaccharide 1-phosphate intermediate (termed DS-1-P) to form tetraacyldisaccharide 1,4'-bis-phosphate (lipid IVA). This is Tetraacyldisaccharide 4'-kinase from Bartonella quintana (strain Toulouse) (Rochalimaea quintana).